The sequence spans 779 residues: Transcriptional regulator QRICH1 (779 aa).

M1 is modified (N-acetylmethionine). Positions 6-48 (ENTISFEEYIRVKARSVPQHRMKEFLDSLASKGPEALQEFQQT) constitute a CARD domain. 2 disordered regions span residues 141–163 (QGQA…PSPS) and 219–242 (ALSP…TASV). S346 bears the Phosphoserine mark. Residues K354 and K359 each participate in a glycyl lysine isopeptide (Lys-Gly) (interchain with G-Cter in SUMO2) cross-link. The segment covering 420 to 430 (QQQPQQQTPQE) has biased composition (low complexity). The disordered stretch occupies residues 420–443 (QQQPQQQTPQEQTPPPPQQQQQQQ). Position 467 is a phosphoserine (S467).

It localises to the nucleus. Its subcellular location is the cytoplasm. It is found in the cell membrane. Its function is as follows. Transcriptional regulator that acts as a mediator of the integrated stress response (ISR) through transcriptional control of protein homeostasis under conditions of ER stress. Controls the outcome of the unfolded protein response (UPR), an ER-stress response pathway that either promotes recovery of ER homeostasis and cell survival, or triggers the terminal UPR which elicits programmed cell death when ER stress is prolonged and unresolved. ER stress induces QRICH1 translation by a ribosome translation re-initiation mechanism in response to EIF2S1/eIF-2-alpha phosphorylation, and stress-induced QRICH1 regulates a transcriptional program associated with protein translation, protein secretion-mediated proteotoxicity and cell death during the terminal UPR. May cooperate with ATF4 transcription factor signaling to regulate ER homeostasis which is critical for cell viability. Up-regulates CASP3/caspase-3 activity in epithelial cells under ER stress. Central regulator of proteotoxicity associated with ER stress-mediated inflammatory diseases in the intestines and liver. Involved in chondrocyte hypertrophy, a process required for normal longitudinal bone growth. This Bos taurus (Bovine) protein is Transcriptional regulator QRICH1 (QRICH1).